The primary structure comprises 420 residues: ATP-dependent Clp protease ATP-binding subunit ClpX (420 aa).

One can recognise a ClpX-type ZB domain in the interval 4–57 (KTPGNNGKQKLFCSFCGKEQDAVKRLVAGPGVYICDECISLCNEIIAEDHEHSH). Residues cysteine 16, cysteine 19, cysteine 38, and cysteine 41 each coordinate Zn(2+). 122–129 (PTGSGKTL) contributes to the ATP binding site.

It belongs to the ClpX chaperone family. In terms of assembly, component of the ClpX-ClpP complex. Forms a hexameric ring that, in the presence of ATP, binds to fourteen ClpP subunits assembled into a disk-like structure with a central cavity, resembling the structure of eukaryotic proteasomes.

Functionally, ATP-dependent specificity component of the Clp protease. It directs the protease to specific substrates. Can perform chaperone functions in the absence of ClpP. This chain is ATP-dependent Clp protease ATP-binding subunit ClpX, found in Leptospira interrogans serogroup Icterohaemorrhagiae serovar copenhageni (strain Fiocruz L1-130).